Here is a 449-residue protein sequence, read N- to C-terminus: Probable glycine dehydrogenase (decarboxylating) subunit 1 (449 aa).

The protein belongs to the GcvP family. N-terminal subunit subfamily. As to quaternary structure, the glycine cleavage system is composed of four proteins: P, T, L and H. In this organism, the P 'protein' is a heterodimer of two subunits.

It catalyses the reaction N(6)-[(R)-lipoyl]-L-lysyl-[glycine-cleavage complex H protein] + glycine + H(+) = N(6)-[(R)-S(8)-aminomethyldihydrolipoyl]-L-lysyl-[glycine-cleavage complex H protein] + CO2. Its function is as follows. The glycine cleavage system catalyzes the degradation of glycine. The P protein binds the alpha-amino group of glycine through its pyridoxal phosphate cofactor; CO(2) is released and the remaining methylamine moiety is then transferred to the lipoamide cofactor of the H protein. In Rhodospirillum centenum (strain ATCC 51521 / SW), this protein is Probable glycine dehydrogenase (decarboxylating) subunit 1.